The sequence spans 388 residues: Xylose isomerase (388 aa).

Catalysis depends on residues His54 and Asp57. Mg(2+)-binding residues include Glu181, Glu217, His220, Asp245, Asp255, Asp257, and Asp287.

It belongs to the xylose isomerase family. As to quaternary structure, homotetramer. It depends on Mg(2+) as a cofactor.

It localises to the cytoplasm. The catalysed reaction is alpha-D-xylose = alpha-D-xylulofuranose. Its function is as follows. Involved in D-xylose catabolism. This Streptomyces murinus protein is Xylose isomerase (xylA).